The following is a 196-amino-acid chain: Imidazoleglycerol-phosphate dehydratase (196 aa).

The protein belongs to the imidazoleglycerol-phosphate dehydratase family.

It is found in the cytoplasm. The enzyme catalyses D-erythro-1-(imidazol-4-yl)glycerol 3-phosphate = 3-(imidazol-4-yl)-2-oxopropyl phosphate + H2O. It participates in amino-acid biosynthesis; L-histidine biosynthesis; L-histidine from 5-phospho-alpha-D-ribose 1-diphosphate: step 6/9. The sequence is that of Imidazoleglycerol-phosphate dehydratase from Granulibacter bethesdensis (strain ATCC BAA-1260 / CGDNIH1).